The following is a 269-amino-acid chain: Putative pyruvate, phosphate dikinase regulatory protein (269 aa).

147–154 (GVSRTSKT) contributes to the ADP binding site.

Belongs to the pyruvate, phosphate/water dikinase regulatory protein family. PDRP subfamily.

The enzyme catalyses N(tele)-phospho-L-histidyl/L-threonyl-[pyruvate, phosphate dikinase] + ADP = N(tele)-phospho-L-histidyl/O-phospho-L-threonyl-[pyruvate, phosphate dikinase] + AMP + H(+). The catalysed reaction is N(tele)-phospho-L-histidyl/O-phospho-L-threonyl-[pyruvate, phosphate dikinase] + phosphate + H(+) = N(tele)-phospho-L-histidyl/L-threonyl-[pyruvate, phosphate dikinase] + diphosphate. Its function is as follows. Bifunctional serine/threonine kinase and phosphorylase involved in the regulation of the pyruvate, phosphate dikinase (PPDK) by catalyzing its phosphorylation/dephosphorylation. This Geotalea uraniireducens (strain Rf4) (Geobacter uraniireducens) protein is Putative pyruvate, phosphate dikinase regulatory protein.